Here is a 190-residue protein sequence, read N- to C-terminus: Small ribosomal subunit protein mS23 (190 aa).

Ala2 is subject to N-acetylalanine. Lys102 bears the N6-acetyllysine mark. Residues 139–190 form a disordered region; the sequence is RTQHGGSHVSRKSEHLSVRPQTALEENETQKEVPQDQHLEAPADQSKGLLPP. Over residues 166 to 179 the composition is skewed to basic and acidic residues; it reads ETQKEVPQDQHLEA.

It belongs to the mitochondrion-specific ribosomal protein mS23 family. As to quaternary structure, component of the mitochondrial small ribosomal subunit (mt-SSU). Mature mammalian 55S mitochondrial ribosomes consist of a small (28S) and a large (39S) subunit. The 28S small subunit contains a 12S ribosomal RNA (12S mt-rRNA) and 30 different proteins. The 39S large subunit contains a 16S rRNA (16S mt-rRNA), a copy of mitochondrial valine transfer RNA (mt-tRNA(Val)), which plays an integral structural role, and 52 different proteins.

Its subcellular location is the mitochondrion. The polypeptide is Small ribosomal subunit protein mS23 (MRPS23) (Homo sapiens (Human)).